The sequence spans 1414 residues: DNA-directed RNA polymerase subunit beta' (1414 aa).

Residues cysteine 70, cysteine 72, cysteine 85, and cysteine 88 each contribute to the Zn(2+) site. Positions 461, 463, and 465 each coordinate Mg(2+). Zn(2+) contacts are provided by cysteine 820, cysteine 894, cysteine 901, and cysteine 904.

The protein belongs to the RNA polymerase beta' chain family. The RNAP catalytic core consists of 2 alpha, 1 beta, 1 beta' and 1 omega subunit. When a sigma factor is associated with the core the holoenzyme is formed, which can initiate transcription. Requires Mg(2+) as cofactor. It depends on Zn(2+) as a cofactor.

The enzyme catalyses RNA(n) + a ribonucleoside 5'-triphosphate = RNA(n+1) + diphosphate. In terms of biological role, DNA-dependent RNA polymerase catalyzes the transcription of DNA into RNA using the four ribonucleoside triphosphates as substrates. The protein is DNA-directed RNA polymerase subunit beta' of Cupriavidus taiwanensis (strain DSM 17343 / BCRC 17206 / CCUG 44338 / CIP 107171 / LMG 19424 / R1) (Ralstonia taiwanensis (strain LMG 19424)).